Consider the following 792-residue polypeptide: Probable exo-1,4-beta-xylosidase xlnD (792 aa).

The signal sequence occupies residues Met-1–Ala-20. N-linked (GlcNAc...) asparagine glycans are attached at residues Asn-23, Asn-87, Asn-142, and Asn-246. The active site involves Asp-310. 10 N-linked (GlcNAc...) asparagine glycosylation sites follow: Asn-326, Asn-385, Asn-391, Asn-404, Asn-438, Asn-475, Asn-479, Asn-516, Asn-677, and Asn-699.

It belongs to the glycosyl hydrolase 3 family.

It localises to the secreted. The enzyme catalyses Hydrolysis of (1-&gt;4)-beta-D-xylans, to remove successive D-xylose residues from the non-reducing termini.. Its pathway is glycan degradation; xylan degradation. Xylan 1,4-beta-xylosidase involved in the hydrolysis of xylan, a major structural heterogeneous polysaccharide found in plant biomass representing the second most abundant polysaccharide in the biosphere, after cellulose. The sequence is that of Probable exo-1,4-beta-xylosidase xlnD (xlnD) from Aspergillus clavatus (strain ATCC 1007 / CBS 513.65 / DSM 816 / NCTC 3887 / NRRL 1 / QM 1276 / 107).